The chain runs to 129 residues: Class I hydrophobin 11 (129 aa).

The first 19 residues, 1 to 19 (MRLTPLLAALALPLLTVLA), serve as a signal peptide directing secretion. Cystine bridges form between Cys-48–Cys-106, Cys-55–Cys-100, Cys-56–Cys-89, and Cys-107–Cys-122.

This sequence belongs to the fungal hydrophobin family. As to quaternary structure, self-assembles to form functional amyloid fibrils called rodlets. Self-assembly into fibrillar rodlets occurs spontaneously at hydrophobic:hydrophilic interfaces and the rodlets further associate laterally to form amphipathic monolayers.

It localises to the secreted. It is found in the cell wall. Its function is as follows. Aerial growth, conidiation, and dispersal of filamentous fungi in the environment rely upon a capability of their secreting small amphipathic proteins called hydrophobins (HPBs) with low sequence identity. Class I can self-assemble into an outermost layer of rodlet bundles on aerial cell surfaces, conferring cellular hydrophobicity that supports fungal growth, development and dispersal; whereas Class II form highly ordered films at water-air interfaces through intermolecular interactions but contribute nothing to the rodlet structure. This Pleurotus ostreatus (strain PC15) (Oyster mushroom) protein is Class I hydrophobin 11.